The following is a 175-amino-acid chain: MEALVYAVSWAPGRTSHPDTPPNIYEGGLGAQQKQCPSAQGSKPKNFRLRHLRGLALYLPGHLQPAGQCESHWLGRLLAGGCLPQPEGLVWPLDLAQGTVGRGNSHHSALLEAQLPRDSRGNTASSSSMDPAKGAPSQSGPPEGLGLRPKRSWGAPEETTCPLCKRTRSGGLERL.

The tract at residues 113–175 is disordered; that stretch reads AQLPRDSRGN…RTRSGGLERL (63 aa).

This is an uncharacterized protein from Bos taurus (Bovine).